A 502-amino-acid chain; its full sequence is Mannitol 2-dehydrogenase (502 aa).

37 to 48 (IVHIGVGGFHRA) contacts NAD(+).

The protein belongs to the mannitol dehydrogenase family. Monomer.

The enzyme catalyses D-mannitol + NAD(+) = D-fructose + NADH + H(+). Functionally, catalyzes the NAD(H)-dependent interconversion of D-fructose and D-mannitol in the mannitol metabolic pathway. This Aspergillus fumigatus (strain CBS 144.89 / FGSC A1163 / CEA10) (Neosartorya fumigata) protein is Mannitol 2-dehydrogenase.